The sequence spans 347 residues: Molybdenum cofactor biosynthesis bifunctional protein (347 aa).

The tract at residues 1-158 (MFTHLDENQQ…EKTGGKADVS (158 aa)) is molybdenum cofactor biosynthesis protein C. Residues 75 to 77 (FCH) and 116 to 117 (ME) each bind substrate. The active-site For MoaC activity is the Asp-131. Positions 159-347 (QTPLYGLVLT…NSPEDYGQIN (189 aa)) are molybdenum cofactor guanylyltransferase. GTP is bound by residues 167-169 (LTG), Lys-179, Asp-226, and Asp-255. Position 255 (Asp-255) interacts with Mg(2+).

It in the N-terminal section; belongs to the MoaC family. This sequence in the C-terminal section; belongs to the MobA family. Requires Mg(2+) as cofactor.

The protein localises to the cytoplasm. It carries out the reaction Mo-molybdopterin + GTP + H(+) = Mo-molybdopterin guanine dinucleotide + diphosphate. The catalysed reaction is (8S)-3',8-cyclo-7,8-dihydroguanosine 5'-triphosphate = cyclic pyranopterin phosphate + diphosphate. It participates in cofactor biosynthesis; molybdopterin biosynthesis. Catalyzes the conversion of (8S)-3',8-cyclo-7,8-dihydroguanosine 5'-triphosphate to cyclic pyranopterin monophosphate (cPMP). In terms of biological role, transfers a GMP moiety from GTP to Mo-molybdopterin (Mo-MPT) cofactor (Moco or molybdenum cofactor) to form Mo-molybdopterin guanine dinucleotide (Mo-MGD) cofactor. The polypeptide is Molybdenum cofactor biosynthesis bifunctional protein (moaC/mobA) (Synechocystis sp. (strain ATCC 27184 / PCC 6803 / Kazusa)).